The sequence spans 257 residues: HTH-type transcriptional activator mta (257 aa).

The HTH merR-type domain maps to 2–71 (KYQVKQVAEI…LDEIKEMLDH (70 aa)). The segment at residues 5 to 24 (VKQVAEISGVSIRTLHHYDN) is a DNA-binding region (H-T-H motif). The tract at residues 71-74 (HPNF) is hinge. An essential for dimerization region spans residues 76-104 (RKAALQSQKEILMKKKQRMDEMIQTIDRT). Residues 76–107 (RKAALQSQKEILMKKKQRMDEMIQTIDRTLLS) are a coiled coil.

As to quaternary structure, homodimer.

The protein resides in the cytoplasm. In terms of biological role, global transcriptional regulator that activates transcription of bmr and blt by binding directly to their promoter. Also stimulates the expression of the mta gene itself, ydfK and ymfE. The sequence is that of HTH-type transcriptional activator mta (mta) from Bacillus subtilis (strain 168).